The following is a 586-amino-acid chain: Arginine--tRNA ligase (586 aa).

A 'HIGH' region motif is present at residues 131–141 (ANPTGPMHVGH).

The protein belongs to the class-I aminoacyl-tRNA synthetase family. In terms of assembly, monomer.

It is found in the cytoplasm. It carries out the reaction tRNA(Arg) + L-arginine + ATP = L-arginyl-tRNA(Arg) + AMP + diphosphate. This Xanthobacter autotrophicus (strain ATCC BAA-1158 / Py2) protein is Arginine--tRNA ligase.